A 132-amino-acid chain; its full sequence is Holo-[acyl-carrier-protein] synthase (132 aa).

Mg(2+) is bound by residues aspartate 8 and glutamate 62.

This sequence belongs to the P-Pant transferase superfamily. AcpS family. The cofactor is Mg(2+).

Its subcellular location is the cytoplasm. The catalysed reaction is apo-[ACP] + CoA = holo-[ACP] + adenosine 3',5'-bisphosphate + H(+). In terms of biological role, transfers the 4'-phosphopantetheine moiety from coenzyme A to a Ser of acyl-carrier-protein. This is Holo-[acyl-carrier-protein] synthase from Methylibium petroleiphilum (strain ATCC BAA-1232 / LMG 22953 / PM1).